A 426-amino-acid polypeptide reads, in one-letter code: Peptidoglycan DD-endopeptidase ShyB (426 aa).

Residues 1-21 form the signal peptide; sequence MGQFRFLALIVAVLCFSVALF. Positions 32 to 48 are enriched in polar residues; the sequence is SYSVPLNQSVNTSQPPS. Residues 32–55 are disordered; that stretch reads SYSVPLNQSVNTSQPPSSEMVPSD. 3 residues coordinate Zn(2+): His291, Asp295, and His372.

Belongs to the peptidase M23B family. Monomer. Requires Zn(2+) as cofactor.

The protein localises to the periplasm. It participates in cell wall degradation; peptidoglycan degradation. Not inhibited by metal chelator EDTA. In terms of biological role, cell wall peptidoglycan (PG) DD-endopeptidase, which may act as a substitute for other zinc-dependent PG endopeptidases (ShyA and ShyC) during zinc starvation. Hydrolyzes peptide cross-links which covalently connect adjacent PG strands probably to allow insertion of new glycans and thus cell wall expansion. Degrades purified whole PG sacculi in vitro. It is unclear how it is able to function in low zinc environments, but that may possibly be due to binding zinc with very high affinity, utilizing an alternative metal cofactor or that it may function independently of a bound metal cofactor. This is Peptidoglycan DD-endopeptidase ShyB from Vibrio cholerae serotype O1 (strain ATCC 39315 / El Tor Inaba N16961).